The sequence spans 446 residues: Tubulin beta-6 chain (446 aa).

Residues 1-4 carry the MREI motif motif; it reads MREI. GTP-binding residues include glutamine 11, glutamate 69, serine 138, glycine 142, threonine 143, and glycine 144. Mg(2+) is bound at residue glutamate 69. Position 172 is a phosphoserine; by CDK1 (serine 172). 2 residues coordinate GTP: asparagine 204 and asparagine 226. Glutamate 438 carries the 5-glutamyl polyglutamate modification.

It belongs to the tubulin family. As to quaternary structure, dimer of alpha and beta chains. A typical microtubule is a hollow water-filled tube with an outer diameter of 25 nm and an inner diameter of 15 nM. Alpha-beta heterodimers associate head-to-tail to form protofilaments running lengthwise along the microtubule wall with the beta-tubulin subunit facing the microtubule plus end conferring a structural polarity. Microtubules usually have 13 protofilaments but different protofilament numbers can be found in some organisms and specialized cells. Mg(2+) is required as a cofactor. Some glutamate residues at the C-terminus are polyglutamylated, resulting in polyglutamate chains on the gamma-carboxyl group. Polyglutamylation plays a key role in microtubule severing by spastin (SPAST). SPAST preferentially recognizes and acts on microtubules decorated with short polyglutamate tails: severing activity by SPAST increases as the number of glutamates per tubulin rises from one to eight, but decreases beyond this glutamylation threshold. Glutamylation is also involved in cilia motility. In terms of processing, some glutamate residues at the C-terminus are monoglycylated but not polyglycylated due to the absence of functional TTLL10 in human. Monoglycylation is mainly limited to tubulin incorporated into cilia and flagella axonemes, which is required for their stability and maintenance. Flagella glycylation controls sperm motility. Both polyglutamylation and monoglycylation can coexist on the same protein on adjacent residues, and lowering glycylation levels increases polyglutamylation, and reciprocally. Post-translationally, phosphorylated on Ser-172 by CDK1 during the cell cycle, from metaphase to telophase, but not in interphase. This phosphorylation inhibits tubulin incorporation into microtubules. Ubiquitous. Maximal expression in breast and lung, where it represents around 10% of all beta-tubulins. Largely decreased expression in most cancerous tissues.

The protein resides in the cytoplasm. Its subcellular location is the cytoskeleton. In terms of biological role, tubulin is the major constituent of microtubules, a cylinder consisting of laterally associated linear protofilaments composed of alpha- and beta-tubulin heterodimers. Microtubules grow by the addition of GTP-tubulin dimers to the microtubule end, where a stabilizing cap forms. Below the cap, tubulin dimers are in GDP-bound state, owing to GTPase activity of alpha-tubulin. The chain is Tubulin beta-6 chain (TUBB6) from Homo sapiens (Human).